A 491-amino-acid chain; its full sequence is Limb region 1 homolog-like protein (491 aa).

The Extracellular portion of the chain corresponds to 1 to 20; that stretch reads METEDVTVREQIFHDRVRET. Residues 21–41 form a helical membrane-spanning segment; sequence IICVLLFICLYILSHFILTHF. The Cytoplasmic portion of the chain corresponds to 42–59; that stretch reads KKSAEFVTDDIEDATVNK. The helical transmembrane segment at 60 to 80 threads the bilayer; the sequence is IALWLCTFTLSVAVCAVLLLP. The Extracellular segment spans residues 81-111; that stretch reads ISILSNEVLLTFPHSYYMQWLNGSLIRGLWN. Residues 112–132 traverse the membrane as a helical segment; it reads LVFLFSNLSLVFLMPFAYFFT. Over 133-152 the chain is Cytoplasmic; it reads ESEGFAGSKKGVMARVYETA. Residues 153–173 form a helical membrane-spanning segment; sequence VMLLLLSLLVLGIVWVASALL. The Extracellular segment spans residues 174–192; it reads HHNTARESLYDLWEYYLPY. A helical transmembrane segment spans residues 193–213; it reads LYSGISLFGVLLLLLCTPFGL. The Cytoplasmic segment spans residues 214 to 292; that stretch reads SRMFSVTGSL…RKRASPWQRN (79 aa). A helical membrane pass occupies residues 293–313; sequence LVYPVAMLLLLALTAVSVLMV. Topologically, residues 314 to 346 are extracellular; the sequence is CFHVLELLFDESAMPRGMEDPHLGLASFSMLGS. A helical transmembrane segment spans residues 347 to 367; it reads LGAAVQVVIILYLMVSSVVGF. The Cytoplasmic portion of the chain corresponds to 368 to 384; it reads YSSPLFTGLLPRAQDTT. Residues 385 to 405 traverse the membrane as a helical segment; sequence LTQIIGNCVSLLILSSALPVF. The Extracellular segment spans residues 406-427; sequence SRTLGITKFDLLGDFGRHDWLG. Residues 428–448 traverse the membrane as a helical segment; that stretch reads SFHIVFLYNMLFAGLTSACLI. The Cytoplasmic portion of the chain corresponds to 449 to 491; it reads NTVTWALQRELIRAFGLHRLPLTVSRSTIPLKLLLANGLSKIH.

The protein belongs to the LIMR family. Dimer. Can also form higher oligomers.

The protein localises to the cell membrane. The protein resides in the endoplasmic reticulum membrane. Its function is as follows. May play a role in lymphocyte development by negatively regulating the canonical Wnt signaling pathway. May act as a LCN1 receptor. This is Limb region 1 homolog-like protein (lmbr1l) from Danio rerio (Zebrafish).